A 277-amino-acid polypeptide reads, in one-letter code: uncharacterized protein (277 aa).

An SWIM-type zinc finger spans residues 139-167; the sequence is TARELSLDCSCPDYAVPCKHLAATFYLLA.

This is an uncharacterized protein from Mycobacterium tuberculosis (strain ATCC 25618 / H37Rv).